Consider the following 1759-residue polypeptide: Collagen alpha-1(IV) chain (1759 aa).

The signal sequence occupies residues Met-1–Cys-20. Positions Gln-21–Lys-194 are cleaved as a propeptide — N-terminal propeptide (7S domain). Disordered regions lie at residues Pro-51 to Pro-245, Lys-269 to Gly-415, Ala-548 to Pro-596, Pro-618 to Gly-650, Ile-666 to Pro-720, and Arg-787 to Gly-1522. 3 stretches are compositionally biased toward low complexity: residues His-104 to Leu-116, Pro-140 to Pro-153, and Pro-278 to Lys-293. The segment at Gly-195–Trp-1530 is triple-helical region. Composition is skewed to gly residues over residues Gly-324–Gly-345, Gly-360–Gly-370, and Gly-379–Gly-388. 2 stretches are compositionally biased toward low complexity: residues Arg-399–Pro-411 and Met-574–Leu-595. Low complexity predominate over residues Tyr-833–Pro-848. A compositionally biased stretch (gly residues) spans Gly-904 to Gly-913. Composition is skewed to low complexity over residues Tyr-1037–Pro-1047, Glu-1219–Pro-1232, Pro-1247–Asp-1271, and Gln-1281–Pro-1309. The segment covering Gly-1310 to Gly-1319 has biased composition (gly residues). Positions Leu-1341 to Glu-1357 are enriched in low complexity. Basic and acidic residues predominate over residues Pro-1410–Leu-1422. 2 stretches are compositionally biased toward low complexity: residues Asp-1423 to Pro-1437 and Pro-1472 to Pro-1482. A compositionally biased stretch (gly residues) spans Gly-1495–Gly-1504. Residues Gly-1535 to Arg-1759 enclose the Collagen IV NC1 domain. 6 disulfide bridges follow: Cys-1550-Cys-1641, Cys-1583-Cys-1638, Cys-1595-Cys-1601, Cys-1660-Cys-1755, Cys-1694-Cys-1752, and Cys-1706-Cys-1712. Residue Met-1623 forms an S-Lysyl-methionine sulfilimine (Met-Lys) (interchain with K-1741) linkage. An S-Lysyl-methionine sulfilimine (Lys-Met) (interchain with M-1623) cross-link involves residue Lys-1741.

This sequence belongs to the type IV collagen family. Trimers of two alpha 1(IV) and one alpha 2(IV) chain. Type IV collagen forms a mesh-like network linked through intermolecular interactions between 7S domains and between NC1 domains. In terms of processing, prolines at the third position of the tripeptide repeating unit (G-X-Y) are hydroxylated in some or all of the chains. Type IV collagens contain numerous cysteine residues which are involved in inter- and intramolecular disulfide bonding. 12 of these, located in the NC1 domain, are conserved in all known type IV collagens. Post-translationally, the trimeric structure of the NC1 domains is stabilized by covalent bonds between Lys and Met residues.

The protein localises to the secreted. It is found in the extracellular space. The protein resides in the extracellular matrix. It localises to the basement membrane. Collagen type IV is specific for basement membranes. Required to restrict presynaptic growth at the neuromuscular junctions (NMJ) in late larval stage and in adult motor neurons. May play a role in axon regeneration in embryos following injury in D-type motor neurons. This chain is Collagen alpha-1(IV) chain, found in Caenorhabditis elegans.